The chain runs to 1429 residues: Probable ATP-dependent RNA helicase spindle-E (1429 aa).

The Helicase ATP-binding domain maps to 121–288; the sequence is VNAINTHQVV…FSTKVSVPPV (168 aa). 134 to 141 is an ATP binding site; the sequence is GETGCGKT. The short motif at 234–237 is the DEAH box element; that stretch reads DEVH. The 173-residue stretch at 349–521 folds into the Helicase C-terminal domain; it reads QSEQSYDDAK…NSVLKAKLLD (173 aa). Positions 933–996 constitute a Tudor domain; it reads AGVLTKGMMV…RLMTKELLSQ (64 aa).

This sequence belongs to the DEAD box helicase family. DEAH subfamily.

Its subcellular location is the cytoplasm. It catalyses the reaction ATP + H2O = ADP + phosphate + H(+). Functionally, probable ATP-binding RNA helicase which plays a central role during spermatogenesis and oogenesis by repressing transposable elements and preventing their mobilization, which is essential for the germline integrity. Acts via the piRNA metabolic process, which mediates the repression of transposable elements during meiosis by forming complexes composed of piRNAs and Piwi and govern the methylation and subsequent repression of transposons. Involved in the repression of LTR retrotransposon copia. Also involved in telomere regulation by repressing specialized telomeric retroelements HeT-A, TAHRE, and TART; Drosophila telomeres being maintained by transposition of specialized telomeric retroelements. Involved in telomeric trans-silencing, a repression mechanism by which a transposon or a transgene inserted in subtelomeric heterochromatin has the capacity to repress in trans in the female germline, a homologous transposon, or transgene located in euchromatin. Involved in the repression of testis-expressed Stellate genes by the homologous Su(Ste) repeats. Required for anteroposterior and dorsoventral axis formation during oogenesis. This is Probable ATP-dependent RNA helicase spindle-E (spn-E) from Drosophila ananassae (Fruit fly).